Reading from the N-terminus, the 448-residue chain is Proline iminopeptidase aneH (448 aa).

One can recognise an AB hydrolase-1 domain in the interval 64-191 (PWMLYLQGGP…VEVFIGGGPC (128 aa)). Catalysis depends on Ser-164, which acts as the Nucleophile. Asp-397 is a catalytic residue. His-425 acts as the Proton donor in catalysis.

This sequence belongs to the peptidase S33 family. In terms of assembly, homooligomer.

Its subcellular location is the cytoplasm. It carries out the reaction Release of N-terminal proline from a peptide.. It participates in secondary metabolite biosynthesis. In terms of biological role, proline iminopeptidase; part of the gene cluster that mediates the biosynthesis of aculenes, a unique type of norsesquiterpenes that contain a nordaucane skeleton linked to an L-proline moiety and are of mixed biosynthetic origin. The pathway begins with the synthesis of dauca-4,7-diene by the terpene cyclase aneC using farnesyl pyrophosphate (FPP) as substrate. The cytochrome P450 monooxygenase aneF then performs the initial oxidation at C-12 of dauca-4,7-diene to yield asperaculane D. Asperaculane D is substrate of the cytochrome P450 monooxygenase aneD for C-10 hydroxylation to yield asperaculane E. The cytochrome P450 monooxygenase aneG then converts asperaculane E into aculene D via C-2 oxidation. The monomodular nonribosomal peptide synthtase aneB adenylates L-proline and the thiohydrolase aneE transfers this activated L-proline derivative to aculenes D and C to produce respectively aculenes B and A. The dioxygenase aneA converts aculene D into aculene C, and aculene B into aculene A by introducing the 5,6-alkene moiety. Asperculanes A, B, C and F, as well as 14-prolyl asperculane C, might be shunt products of the pathway. The chain is Proline iminopeptidase aneH from Aspergillus aculeatus (strain ATCC 16872 / CBS 172.66 / WB 5094).